A 322-amino-acid chain; its full sequence is N-acetyl-gamma-glutamyl-phosphate reductase (322 aa).

The active site involves Cys-132.

Belongs to the NAGSA dehydrogenase family. Type 1 subfamily.

It is found in the cytoplasm. The catalysed reaction is N-acetyl-L-glutamate 5-semialdehyde + phosphate + NADP(+) = N-acetyl-L-glutamyl 5-phosphate + NADPH + H(+). It functions in the pathway amino-acid biosynthesis; L-arginine biosynthesis; N(2)-acetyl-L-ornithine from L-glutamate: step 3/4. Catalyzes the NADPH-dependent reduction of N-acetyl-5-glutamyl phosphate to yield N-acetyl-L-glutamate 5-semialdehyde. The protein is N-acetyl-gamma-glutamyl-phosphate reductase of Bacteroides thetaiotaomicron (strain ATCC 29148 / DSM 2079 / JCM 5827 / CCUG 10774 / NCTC 10582 / VPI-5482 / E50).